Consider the following 428-residue polypeptide: tRNA(Ile)-lysidine synthase (428 aa).

An ATP-binding site is contributed by 28–33 (SGGVDS).

The protein belongs to the tRNA(Ile)-lysidine synthase family.

It is found in the cytoplasm. It carries out the reaction cytidine(34) in tRNA(Ile2) + L-lysine + ATP = lysidine(34) in tRNA(Ile2) + AMP + diphosphate + H(+). Its function is as follows. Ligates lysine onto the cytidine present at position 34 of the AUA codon-specific tRNA(Ile) that contains the anticodon CAU, in an ATP-dependent manner. Cytidine is converted to lysidine, thus changing the amino acid specificity of the tRNA from methionine to isoleucine. The sequence is that of tRNA(Ile)-lysidine synthase from Streptococcus pyogenes serotype M3 (strain ATCC BAA-595 / MGAS315).